Reading from the N-terminus, the 599-residue chain is Cytochrome P450 monooxygenase ALT8 (599 aa).

The next 2 helical transmembrane spans lie at 4–21 (LACV…VYLG) and 36–56 (ILFG…PAYF). A glycan (N-linked (GlcNAc...) asparagine) is linked at Asn-127. The segment covering 495–504 (DDSSAASPSF) has biased composition (low complexity). The segment at 495 to 522 (DDSSAASPSFGGSGKRKSQYTDTHKEPS) is disordered. Cys-539 contributes to the heme binding site.

This sequence belongs to the cytochrome P450 family. Heme is required as a cofactor.

Its subcellular location is the membrane. It functions in the pathway secondary metabolite biosynthesis. In terms of biological role, cytochrome P450 monooxygenase; part of the gene cluster that mediates the biosynthesis of the host-selective toxins (HSTs) AAL-toxins, sphinganine-analog mycotoxins responsible for Alternaria stem canker on tomato by the tomato pathotype. The biosynthesis starts with the polyketide synthase ALT1-catalyzed C-16 carbon chain assembly from one starter acetyl-CoA unit with malonyl-CoA extender units. ALT1 also selectively transfers methyl groups at the first and the third cycle of chain elongation for AAL toxin. The C-16 polyketide chain is released from the enzyme by a nucleophilic attack of a carbanion, which is derived from R-carbon of glycin by decarboxylation, on the carbonyl carbon of polyketide acyl chain. This step is probably catalyzed by a pyridoxal 5'-phosphate-dependent aminoacyl transferase ALT4. The respective functions of the other enzymes encoded by the cluster have still to be elucidated. The sphingosine N-acyltransferase-like protein ALT7 seems not to act as a resistance/self-tolerance factor against the toxin in the toxin biosynthetic gene cluster, contrary to what is expected. The protein is Cytochrome P450 monooxygenase ALT8 of Alternaria alternata (Alternaria rot fungus).